The chain runs to 180 residues: Cell division protein SepF (180 aa).

The tract at residues 21–40 (LDDDYDDGRAVGRDDRRAMH) is disordered. The span at 27–40 (DGRAVGRDDRRAMH) shows a compositional bias: basic and acidic residues.

The protein belongs to the SepF family. In terms of assembly, homodimer. Interacts with FtsZ.

Its subcellular location is the cytoplasm. Cell division protein that is part of the divisome complex and is recruited early to the Z-ring. Probably stimulates Z-ring formation, perhaps through the cross-linking of FtsZ protofilaments. Its function overlaps with FtsA. The protein is Cell division protein SepF of Frankia casuarinae (strain DSM 45818 / CECT 9043 / HFP020203 / CcI3).